The following is a 161-amino-acid chain: MVAMEAMAAMEVMVAAMAATADTVASSAASATATEATVAMDTASLSLPLQLSPRSLPQSSLSATAATVATDTVVSSADTEVSDTEDSAATVSATASLSMLPQSSPRSLPQSSLSATAATVDSVTDMADTAMDTKQFISKGNEHFFAASYLCAWADQSAAGS.

As to quaternary structure, interacts with ospA protein from B.burgdorferi. Glycosylated. Specifically expressed in gut. Localizes predominantly in the intercellular spaces and luminal surface of the gut. In the gut, it localizes along tight junctions. Not expressed in salivary gland or hemolymph.

The protein resides in the cell membrane. Functionally, serves as a receptor for ospA protein of B.burgdorferi, the Lyme disease agent. Required for spirochetal colonization. Essential for pathogen adherence to the vector. This Ixodes scapularis (Black-legged tick) protein is Tick receptor for ospA (TROSPA).